A 201-amino-acid polypeptide reads, in one-letter code: Adenylyl-sulfate kinase (201 aa).

35 to 42 (GLSGSGKS) is an ATP binding site. The Phosphoserine intermediate role is filled by Ser109.

This sequence belongs to the APS kinase family.

It catalyses the reaction adenosine 5'-phosphosulfate + ATP = 3'-phosphoadenylyl sulfate + ADP + H(+). Its pathway is sulfur metabolism; hydrogen sulfide biosynthesis; sulfite from sulfate: step 2/3. In terms of biological role, catalyzes the synthesis of activated sulfate. This chain is Adenylyl-sulfate kinase, found in Shigella flexneri.